The primary structure comprises 352 residues: DNA polymerase IV (352 aa).

Positions 6–186 (IIHIDMDAFY…LPLGKIPGAG (181 aa)) constitute a UmuC domain. Mg(2+) is bound by residues D10 and D104. E105 is a catalytic residue.

The protein belongs to the DNA polymerase type-Y family. In terms of assembly, monomer. Mg(2+) serves as cofactor.

The protein localises to the cytoplasm. It catalyses the reaction DNA(n) + a 2'-deoxyribonucleoside 5'-triphosphate = DNA(n+1) + diphosphate. Functionally, poorly processive, error-prone DNA polymerase involved in untargeted mutagenesis. Copies undamaged DNA at stalled replication forks, which arise in vivo from mismatched or misaligned primer ends. These misaligned primers can be extended by PolIV. Exhibits no 3'-5' exonuclease (proofreading) activity. May be involved in translesional synthesis, in conjunction with the beta clamp from PolIII. The chain is DNA polymerase IV from Neisseria gonorrhoeae (strain ATCC 700825 / FA 1090).